Consider the following 241-residue polypeptide: High mobility group B protein 7 (241 aa).

Composition is skewed to polar residues over residues 1-11 and 20-29; these read MAGPSTTSNAP and ETSSNTSTTL. 3 disordered regions span residues 1-30, 75-116, and 174-241; these read MAGPSTTSNAPKQRKRVEAETSSNTSTTLR, TQAE…NKPK, and EYNK…LDDY. Residues 77–90 show a composition bias toward basic and acidic residues; the sequence is AEAKKKPAEKKKTT. The HMG box DNA-binding region spans 115 to 183; it reads PKRPLTAFFI…EYNKSLESND (69 aa). Acidic residues-rich tracts occupy residues 182–221 and 229–241; these read NDADEEEEDEEKQSDDVDDAEEKQVDDDDEVEEKEVENTD and GKEEEEEEILDDY.

This sequence belongs to the HMGB family. In terms of processing, phosphorylated. In terms of tissue distribution, expressed at low levels in lateral roots, root tips, cotyledons, leaves and flowers (including pedicels, but excluding styles).

The protein resides in the nucleus. Binds preferentially double-stranded supercoiled DNA. Required for karyogamy during female gametophyte development, when the two polar nuclei fuse to form the diploid central cell nucleus. The chain is High mobility group B protein 7 (HMGB7) from Arabidopsis thaliana (Mouse-ear cress).